The sequence spans 192 residues: Interleukin-18 (192 aa).

A propeptide spanning residues 1-35 (MAAMSEDSCVNFKEMMFIDNTLYFIPEENGDLESD) is cleaved from the precursor.

The protein belongs to the IL-1 family. Forms a ternary complex with ligand-binding receptor subunit IL18R1 and signaling receptor subunit IL18RAP at the plasma membrane. Mature IL18 first binds to IL18R1 forming a low affinity binary complex, which then interacts with IL18RAP to form a high affinity ternary complex that signals inside the cell. Interacts with cargo receptor TMED10; the interaction mediates the translocation from the cytoplasm into the ERGIC (endoplasmic reticulum-Golgi intermediate compartment) and thereby secretion. Post-translationally, the pro-IL-18 precursor is processed by CASP1 to yield its mature, active form. The pro-IL-18 precursor is however not processed by Casp4/Casp11 in rodents. The pro-IL-18 precursor features autoinhibitory interactions between the propeptide and the post-cleavage-site region, preventing recognition by the IL18R1 receptor. Processing by CASP1 induces conformational changes to generate critical receptor-binding sites. The mature form is then secreted and released in the extracellular milieu by passing through the gasdermin-D (GSDMD) pore. In contrast, cleavage by CASP3 inactivates IL18.

It is found in the cytoplasm. Its subcellular location is the secreted. Functionally, pro-inflammatory cytokine primarily involved in epithelial barrier repair, polarized T-helper 1 (Th1) cell and natural killer (NK) cell immune responses. Upon binding to IL18R1 and IL18RAP, forms a signaling ternary complex which activates NF-kappa-B, triggering synthesis of inflammatory mediators. Synergizes with IL12/interleukin-12 to induce IFNG synthesis from T-helper 1 (Th1) cells and natural killer (NK) cells. Involved in transduction of inflammation downstream of pyroptosis: its mature form is specifically released in the extracellular milieu by passing through the gasdermin-D (GSDMD) pore. The protein is Interleukin-18 of Mus musculus (Mouse).